A 354-amino-acid chain; its full sequence is Uroporphyrinogen decarboxylase (354 aa).

Residues 27 to 31 (RQAGR), Asp77, Tyr154, Ser209, and His327 contribute to the substrate site.

It belongs to the uroporphyrinogen decarboxylase family. In terms of assembly, homodimer.

It localises to the cytoplasm. It catalyses the reaction uroporphyrinogen III + 4 H(+) = coproporphyrinogen III + 4 CO2. It functions in the pathway porphyrin-containing compound metabolism; protoporphyrin-IX biosynthesis; coproporphyrinogen-III from 5-aminolevulinate: step 4/4. Catalyzes the decarboxylation of four acetate groups of uroporphyrinogen-III to yield coproporphyrinogen-III. This is Uroporphyrinogen decarboxylase from Pseudomonas savastanoi pv. phaseolicola (strain 1448A / Race 6) (Pseudomonas syringae pv. phaseolicola (strain 1448A / Race 6)).